We begin with the raw amino-acid sequence, 195 residues long: uncharacterized protein (195 aa).

In terms of domain architecture, HTH tetR-type spans 6-66; sequence VESRKRLLKA…ELITDFHSRV (61 aa). The H-T-H motif DNA-binding region spans 29–48; sequence KVSEIVKKAGFTQPSFYLYF.

This is an uncharacterized protein from Bacillus subtilis (strain 168).